Here is a 771-residue protein sequence, read N- to C-terminus: U-box domain-containing protein 6 (771 aa).

Residues 274-348 (IPPEELRCPI…ASWCEQNGIT (75 aa)) form the U-box domain. The segment at 394–415 (EESSTIESERQQKEKNNAPDEV) is disordered. Residues 400 to 411 (ESERQQKEKNNA) are compositionally biased toward basic and acidic residues. ARM repeat units follow at residues 456 to 499 (EEAR…NLAV), 502 to 542 (NRNK…CLEK), 544 to 581 (KPVI…NLST), 583 to 622 (SPNI…NLAS), and 625 to 664 (EGKE…ILCT). Over residues 706-722 (EQRHRDQPSPNKEEAPR) the composition is skewed to basic and acidic residues. A disordered region spans residues 706 to 751 (EQRHRDQPSPNKEEAPRKTVSAPMAIPAPVSAPESEVKPLTKSISR).

The catalysed reaction is S-ubiquitinyl-[E2 ubiquitin-conjugating enzyme]-L-cysteine + [acceptor protein]-L-lysine = [E2 ubiquitin-conjugating enzyme]-L-cysteine + N(6)-ubiquitinyl-[acceptor protein]-L-lysine.. The protein operates within protein modification; protein ubiquitination. In terms of biological role, functions as an E3 ubiquitin ligase. This Arabidopsis thaliana (Mouse-ear cress) protein is U-box domain-containing protein 6 (PUB6).